Reading from the N-terminus, the 103-residue chain is Secreted LysM effector Mgx1LysM (103 aa).

The N-terminal stretch at 1–18 (MKVTTIIAALLSVAVVDA) is a signal peptide. Disulfide bonds link C31–C89 and C62–C97. One can recognise a LysM domain in the interval 37–85 (IPYVVKKGDTLTHIAHDIYKRKVGICDLAYTNHIGYNPDLIYEDQTLLI). Positions 44, 48, 75, and 77 each coordinate chitin.

It belongs to the secreted LysM effector family. Forms homodimers in a chitin-independent manner through interactions at the N-termini of Mgx1LysM monomers. Homodimers are further polymerized in a chitin-dependent manner.

The protein resides in the secreted. The protein localises to the cell wall. In terms of biological role, secreted effector that enables the plant pathogenic fungus to manipulate host defenses for successful infection. Binds chitin and suppresses the chitin-induced reactive oxygen species (ROS) burst. Chitin-induced polymerization of homodimers forms a contiguous Mg1LysM highly oligomeric super-complexe that is anchored to the chitin in the fungal cell wall to prevent hydrolysis by host chitinases. The chain is Secreted LysM effector Mgx1LysM from Zymoseptoria tritici (strain CBS 115943 / IPO323) (Speckled leaf blotch fungus).